The following is a 463-amino-acid chain: Dipeptidyl peptidase 1 (463 aa).

The N-terminal stretch at M1–G24 is a signal peptide. Residues N29 and N53 are each glycosylated (N-linked (GlcNAc...) asparagine). 2 disulfide bridges follow: C30–C118 and C54–C136. The propeptide occupies A135–H230. N144 carries N-linked (GlcNAc...) asparagine glycosylation. 3 disulfide bridges follow: C255–C298, C291–C331, and C321–C337. Residue C258 is part of the active site. N276 is a glycosylation site (N-linked (GlcNAc...) asparagine). Chloride contacts are provided by F302 and Y304. Y347 lines the chloride pocket. Catalysis depends on residues H405 and N427.

It belongs to the peptidase C1 family. As to quaternary structure, tetramer of heterotrimers consisting of exclusion domain, heavy- and light chains. Chloride is required as a cofactor.

The protein localises to the lysosome. The catalysed reaction is Release of an N-terminal dipeptide, Xaa-Yaa-|-Zaa-, except when Xaa is Arg or Lys, or Yaa or Zaa is Pro.. Its function is as follows. Thiol protease. Has dipeptidylpeptidase activity. Active against a broad range of dipeptide substrates composed of both polar and hydrophobic amino acids. Proline cannot occupy the P1 position and arginine cannot occupy the P2 position of the substrate. Can act as both an exopeptidase and endopeptidase. Activates serine proteases such as elastase, cathepsin G and granzymes A and B. This is Dipeptidyl peptidase 1 (CTSC) from Bos taurus (Bovine).